Reading from the N-terminus, the 313-residue chain is MPKVKSGAIGRRRGRQEQRRELKSAGGLMFNTGIGQHILKNPLIINSIIDKAALRPTDVVLEVGPGTGNMTVKLLEKAKKVVACELDPRLVAELHKRVQGTPVASKLQVLVGDVLKTDLPFFDTCVANLPYQISSPFVFKLLLHRPFFRCAILMFQREFALRLVAKPGDKLYCRLSINTQLLARVDHLMKVGKNNFRPPPKVESSVVRIEPKNPPPPINFQEWDGLVRITFVRKNKTLSAAFKSSAVQQLLEKNYRIHCSVHNIIIPEDFSIADKIQQILTSTGFSDKRARSMDIDDFIRLLHGFNAEGIHFS.

The tract at residues 1 to 21 (MPKVKSGAIGRRRGRQEQRRE) is disordered. S-adenosyl-L-methionine-binding residues include His37, Leu39, Gly64, Glu85, Asp113, and Asn128.

The protein belongs to the class I-like SAM-binding methyltransferase superfamily. rRNA adenine N(6)-methyltransferase family. As to quaternary structure, part of the small subunit (SSU) processome, composed of more than 70 proteins and the RNA chaperone small nucleolar RNA (snoRNA) U3.

The protein resides in the nucleus. Its subcellular location is the nucleoplasm. The protein localises to the nucleolus. The enzyme catalyses adenosine(1779)/adenosine(1780) in 18S rRNA + 4 S-adenosyl-L-methionine = N(6)-dimethyladenosine(1779)/N(6)-dimethyladenosine(1780) in 18S rRNA + 4 S-adenosyl-L-homocysteine + 4 H(+). Its function is as follows. Specifically dimethylates two adjacent adenosines in the loop of a conserved hairpin near the 3'-end of 18S rRNA in the 40S particle. Involved in the pre-rRNA processing steps leading to small-subunit rRNA production independently of its RNA-modifying catalytic activity. Part of the small subunit (SSU) processome, first precursor of the small eukaryotic ribosomal subunit. During the assembly of the SSU processome in the nucleolus, many ribosome biogenesis factors, an RNA chaperone and ribosomal proteins associate with the nascent pre-rRNA and work in concert to generate RNA folding, modifications, rearrangements and cleavage as well as targeted degradation of pre-ribosomal RNA by the RNA exosome. The sequence is that of Dimethyladenosine transferase from Homo sapiens (Human).